The chain runs to 290 residues: 4-hydroxybenzoate octaprenyltransferase (290 aa).

Transmembrane regions (helical) follow at residues 23–43 (IGAL…TPGM), 46–66 (LWIL…GCVV), 99–119 (LFVV…AMTI), 141–161 (LPQV…FAAV), 163–183 (ESLP…AVAY), 212–232 (TLII…IGWL), 233–253 (NGLG…FVYQ), and 268–288 (AFMN…MSYW).

Belongs to the UbiA prenyltransferase family. Mg(2+) serves as cofactor.

It is found in the cell inner membrane. The catalysed reaction is all-trans-octaprenyl diphosphate + 4-hydroxybenzoate = 4-hydroxy-3-(all-trans-octaprenyl)benzoate + diphosphate. The protein operates within cofactor biosynthesis; ubiquinone biosynthesis. Catalyzes the prenylation of para-hydroxybenzoate (PHB) with an all-trans polyprenyl group. Mediates the second step in the final reaction sequence of ubiquinone-8 (UQ-8) biosynthesis, which is the condensation of the polyisoprenoid side chain with PHB, generating the first membrane-bound Q intermediate 3-octaprenyl-4-hydroxybenzoate. In Salmonella paratyphi C (strain RKS4594), this protein is 4-hydroxybenzoate octaprenyltransferase.